We begin with the raw amino-acid sequence, 129 residues long: Small ribosomal subunit protein uS13m (129 aa).

Residues 92–129 (HQDGSPLRGQRTHTNARTARKQIRKGNERRLPKEQATD) form a disordered region. Basic and acidic residues predominate over residues 116–129 (KGNERRLPKEQATD).

This sequence belongs to the universal ribosomal protein uS13 family. In terms of assembly, part of the small ribosomal subunit.

It is found in the mitochondrion. In terms of biological role, located at the top of the head of the small subunit, it contacts several helices of the 18S rRNA. This is Small ribosomal subunit protein uS13m (RPS13) from Zea mays (Maize).